The following is a 243-amino-acid chain: Peptidyl-tRNA hydrolase (243 aa).

Tyr14 lines the tRNA pocket. Catalysis depends on His19, which acts as the Proton acceptor. TRNA contacts are provided by Phe64, Asn66, and Asn112. Residues 184-225 are disordered; the sequence is AAQTRPAEKAKPLATAKPKEGEARTSGGSVAEVGAPPPSPTG. The span at 189–206 shows a compositional bias: basic and acidic residues; the sequence is PAEKAKPLATAKPKEGEA.

It belongs to the PTH family. Monomer.

Its subcellular location is the cytoplasm. The enzyme catalyses an N-acyl-L-alpha-aminoacyl-tRNA + H2O = an N-acyl-L-amino acid + a tRNA + H(+). In terms of biological role, hydrolyzes ribosome-free peptidyl-tRNAs (with 1 or more amino acids incorporated), which drop off the ribosome during protein synthesis, or as a result of ribosome stalling. Functionally, catalyzes the release of premature peptidyl moieties from peptidyl-tRNA molecules trapped in stalled 50S ribosomal subunits, and thus maintains levels of free tRNAs and 50S ribosomes. This Rhodospirillum rubrum (strain ATCC 11170 / ATH 1.1.1 / DSM 467 / LMG 4362 / NCIMB 8255 / S1) protein is Peptidyl-tRNA hydrolase.